We begin with the raw amino-acid sequence, 120 residues long: UPF0102 protein COXBURSA331_A1934 (120 aa).

It belongs to the UPF0102 family.

The protein is UPF0102 protein COXBURSA331_A1934 of Coxiella burnetii (strain RSA 331 / Henzerling II).